Consider the following 388-residue polypeptide: Probable tRNA sulfurtransferase (388 aa).

A THUMP domain is found at 55 to 162 (VTLDDKLKKI…PEGVLIFTDR (108 aa)). Residues 180–181 (LL), 205–206 (TF), arginine 264, glycine 286, and glutamine 295 each bind ATP.

Belongs to the ThiI family.

It localises to the cytoplasm. It carries out the reaction [ThiI sulfur-carrier protein]-S-sulfanyl-L-cysteine + a uridine in tRNA + 2 reduced [2Fe-2S]-[ferredoxin] + ATP + H(+) = [ThiI sulfur-carrier protein]-L-cysteine + a 4-thiouridine in tRNA + 2 oxidized [2Fe-2S]-[ferredoxin] + AMP + diphosphate. The catalysed reaction is [ThiS sulfur-carrier protein]-C-terminal Gly-Gly-AMP + S-sulfanyl-L-cysteinyl-[cysteine desulfurase] + AH2 = [ThiS sulfur-carrier protein]-C-terminal-Gly-aminoethanethioate + L-cysteinyl-[cysteine desulfurase] + A + AMP + 2 H(+). It participates in cofactor biosynthesis; thiamine diphosphate biosynthesis. In terms of biological role, catalyzes the ATP-dependent transfer of a sulfur to tRNA to produce 4-thiouridine in position 8 of tRNAs, which functions as a near-UV photosensor. Also catalyzes the transfer of sulfur to the sulfur carrier protein ThiS, forming ThiS-thiocarboxylate. This is a step in the synthesis of thiazole, in the thiamine biosynthesis pathway. The sulfur is donated as persulfide by IscS. The sequence is that of Probable tRNA sulfurtransferase from Thermotoga maritima (strain ATCC 43589 / DSM 3109 / JCM 10099 / NBRC 100826 / MSB8).